A 994-amino-acid chain; its full sequence is Sarcoplasmic/endoplasmic reticulum calcium ATPase 1 (994 aa).

The Cytoplasmic portion of the chain corresponds to 1-48 (MENAHAKTAEECLAFFGVNESVGLSGEQVRRALEKYGHNELPAEEGKT). A helical membrane pass occupies residues 49–69 (IWELVVEQFEDLLVRILLLAA). The Lumenal portion of the chain corresponds to 70-89 (CISFVLAWFEEGEETITAFV). The chain crosses the membrane as a helical span at residues 90–110 (EPFVILLILIANAVVGVWQER). Over 111–253 (NAENAIEALK…QDKTPLQQKL (143 aa)) the chain is Cytoplasmic. The helical transmembrane segment at 254–273 (DEFGEQLSKVISLICVAVWL) threads the bilayer. The Lumenal portion of the chain corresponds to 274–295 (INIGHFNDPVHGGSWIRGAIYY). The chain crosses the membrane as a helical span at residues 296-313 (FKIAVALAVAAIPEGLPA). Residues Val304, Ala305, Ile307, and Glu309 each coordinate Ca(2+). The Cytoplasmic segment spans residues 314–757 (VITTCLALGT…EEGRAIYNNM (444 aa)). Asp351 serves as the catalytic 4-aspartylphosphate intermediate. Residues Asp351 and Thr353 each coordinate Mg(2+). 10 residues coordinate ATP: Thr353, Glu442, Arg489, Lys515, Arg560, Thr625, Gly626, Asp627, Arg678, and Lys684. Residue Asp703 coordinates Mg(2+). ATP is bound at residue Asn706. The helical transmembrane segment at 758 to 777 (KQFIRYLISSNVGEVVCIFL) threads the bilayer. Asn768 and Glu771 together coordinate Ca(2+). At 778–787 (TAALGLPEAL) the chain is on the lumenal side. The chain crosses the membrane as a helical span at residues 788–808 (IPVQLLWVNLVTDGLPATALG). Residues 788-808 (IPVQLLWVNLVTDGLPATALG) are interaction with PLN. Ca(2+) is bound by residues Asn796, Thr799, and Asp800. The Cytoplasmic portion of the chain corresponds to 809–828 (FNPPDLDIMDKPPRSPKEPL). The chain crosses the membrane as a helical span at residues 829–851 (ISGWLFFRYLAIGGYVGAATVGA). Residues 852-897 (AAWWFLYAEDGPSLTYHQLTHFMQCTHHNAEFEGVDCDIFESPVPM) are Lumenal-facing. Cys876 and Cys888 are joined by a disulfide. A helical membrane pass occupies residues 898–917 (TMALSVLVTIEMCNALNSLS). Glu908 contacts Ca(2+). Topologically, residues 918-930 (ENQSLLRMPPWVN) are cytoplasmic. A helical membrane pass occupies residues 931 to 949 (IWLVGSICLSMSLHFVILY). The interval 932 to 943 (WLVGSICLSMSL) is interaction with PLN. Residues 950–964 (VDPLPMIFKLTHLDL) lie on the Lumenal side of the membrane. Residues 965–985 (AHWLVVLRISFPVILLDEALK) form a helical membrane-spanning segment. The Cytoplasmic portion of the chain corresponds to 986 to 994 (FVARNYLEA).

This sequence belongs to the cation transport ATPase (P-type) (TC 3.A.3) family. Type IIA subfamily. Interacts with sarcolipin (SLN). Interacts with phospholamban (PLN). Interacts with myoregulin (MRLN). Interacts with DWORF. Requires Mg(2+) as cofactor.

Its subcellular location is the endoplasmic reticulum membrane. The protein resides in the sarcoplasmic reticulum membrane. It carries out the reaction Ca(2+)(in) + ATP + H2O = Ca(2+)(out) + ADP + phosphate + H(+). Its activity is regulated as follows. Inhibited by sarcolipin (SLN) and myoregulin (MRLN). Also shown to be inhibited by phospholamban (PLN) in vitro. Enhanced by DWORF; DWORF increases activity by displacing sarcolipin (SLN), phospholamban (PLN) and myoregulin (MRLN). In terms of biological role, key regulator of striated muscle performance by acting as the major Ca(2+) ATPase responsible for the reuptake of cytosolic Ca(2+) into the sarcoplasmic reticulum. Catalyzes the hydrolysis of ATP coupled with the translocation of calcium from the cytosol to the sarcoplasmic reticulum lumen. Contributes to calcium sequestration involved in muscular excitation/contraction. This Gallus gallus (Chicken) protein is Sarcoplasmic/endoplasmic reticulum calcium ATPase 1 (ATP2A1).